A 476-amino-acid chain; its full sequence is Aspartyl/glutamyl-tRNA(Asn/Gln) amidotransferase subunit B (476 aa).

The protein belongs to the GatB/GatE family. GatB subfamily. In terms of assembly, heterotrimer of A, B and C subunits.

The enzyme catalyses L-glutamyl-tRNA(Gln) + L-glutamine + ATP + H2O = L-glutaminyl-tRNA(Gln) + L-glutamate + ADP + phosphate + H(+). It carries out the reaction L-aspartyl-tRNA(Asn) + L-glutamine + ATP + H2O = L-asparaginyl-tRNA(Asn) + L-glutamate + ADP + phosphate + 2 H(+). In terms of biological role, allows the formation of correctly charged Asn-tRNA(Asn) or Gln-tRNA(Gln) through the transamidation of misacylated Asp-tRNA(Asn) or Glu-tRNA(Gln) in organisms which lack either or both of asparaginyl-tRNA or glutaminyl-tRNA synthetases. The reaction takes place in the presence of glutamine and ATP through an activated phospho-Asp-tRNA(Asn) or phospho-Glu-tRNA(Gln). In Laribacter hongkongensis (strain HLHK9), this protein is Aspartyl/glutamyl-tRNA(Asn/Gln) amidotransferase subunit B.